Here is a 248-residue protein sequence, read N- to C-terminus: Probable transcriptional regulatory protein BOV_1660 (248 aa).

This sequence belongs to the TACO1 family.

The protein localises to the cytoplasm. This is Probable transcriptional regulatory protein BOV_1660 from Brucella ovis (strain ATCC 25840 / 63/290 / NCTC 10512).